The primary structure comprises 446 residues: Adenylosuccinate synthetase (446 aa).

Residues Gly20 to Lys26 and Gly48 to Thr50 contribute to the GTP site. Asp21 functions as the Proton acceptor in the catalytic mechanism. 2 residues coordinate Mg(2+): Asp21 and Gly48. Residues Asp21–Lys24, Asn46–His49, Thr137, Arg151, Gln232, Thr247, and Arg319 contribute to the IMP site. The active-site Proton donor is the His49. Ser315–Arg321 serves as a coordination point for substrate. GTP contacts are provided by residues Arg321, Lys347–Asp349, and Ser429–Gly431.

The protein belongs to the adenylosuccinate synthetase family. Homodimer. Mg(2+) serves as cofactor.

It localises to the cytoplasm. It catalyses the reaction IMP + L-aspartate + GTP = N(6)-(1,2-dicarboxyethyl)-AMP + GDP + phosphate + 2 H(+). Its pathway is purine metabolism; AMP biosynthesis via de novo pathway; AMP from IMP: step 1/2. Its function is as follows. Plays an important role in the de novo pathway of purine nucleotide biosynthesis. Catalyzes the first committed step in the biosynthesis of AMP from IMP. This Polynucleobacter necessarius subsp. necessarius (strain STIR1) protein is Adenylosuccinate synthetase.